Reading from the N-terminus, the 456-residue chain is RuvB-like helicase 1 (456 aa).

ATP is bound at residue 70–77 (GPPGTGKT).

This sequence belongs to the RuvB family. Forms homohexameric rings. May form a dodecamer with rept made of two stacked hexameric rings. Component of the chromatin remodeling Ino80 complex. Interacts with Myc and rept. As to expression, higher expression occurs in primordia of mesoderm, anterior and posterior midgut and cephalic furrow early in gastrulation, as well as in endoderm and mesoderm lineages during germ band extension. Later in development expression is only maintained in endoderm cells. Expressed in thoracic and abdominal segment neural precursors of all embryonic chordotonal organs.

The protein localises to the nucleus. It carries out the reaction ATP + H2O = ADP + phosphate + H(+). In terms of biological role, acts as a transcriptional coactivator in Wg signaling caused by altered arm signaling. Pont and rept interfere antagonistically with nuclear arm signaling function, and are required to enhance or reduce arm activity, respectively. Also an essential cofactor for the normal function of Myc; required for cellular proliferation and growth. Functionally, proposed core component of the chromatin remodeling Ino80 complex which is involved in transcriptional regulation, DNA replication and probably DNA repair. This chain is RuvB-like helicase 1, found in Drosophila melanogaster (Fruit fly).